Reading from the N-terminus, the 70-residue chain is Melittin (70 aa).

The first 21 residues, 1–21, serve as a signal peptide directing secretion; sequence MKFLVNVALVFMVVYISFIYA. A propeptide spans 22–43 (removed by a dipeptidylpeptidase); the sequence is APEPEPAPEAEAEADAEADPEA. Gly44 is modified (N-formylglycine; partial). Gln69 is subject to Glutamine amide.

The protein belongs to the melittin family. As to quaternary structure, monomer (in solution and for integration into membranes), homotetramer (in solution and potentially as a toroidal pore in membranes), and potenially homomultimer (as a toroidal pore in membranes). As to expression, expressed by the venom gland.

The protein localises to the secreted. It localises to the target cell membrane. Its function is as follows. Main toxin of bee venom with strong hemolytic activity and antimicrobial activity. It has enhancing effects on bee venom phospholipase A2 activity. This amphipathic toxin binds to negatively charged membrane surface and forms pore by inserting into lipid bilayers inducing the leakage of ions and molecules and the enhancement of permeability that ultimately leads to cell lysis. It acts as a voltage-gated pore with higher selectivity for anions over cations. The ion conductance has been shown to be voltage-dependent. Self-association of melittin in membranes is promoted by high ionic strength, but not by the presence of negatively charged lipids. In vivo, intradermal injection into healthy human volunteers produce sharp pain sensation and an inflammatory response. It produces pain by activating primary nociceptor cells directly and indirectly due to its ability to activate plasma membrane phospholipase A2 and its pore-forming activity. This chain is Melittin (MELT), found in Polistes hebraeus (Paper wasp).